The chain runs to 318 residues: Acetyl-coenzyme A carboxylase carboxyl transferase subunit alpha (318 aa).

The CoA carboxyltransferase C-terminal domain occupies 34-295 (SIEEEITKLR…KATIKQQLAQ (262 aa)).

Belongs to the AccA family. As to quaternary structure, acetyl-CoA carboxylase is a heterohexamer composed of biotin carboxyl carrier protein (AccB), biotin carboxylase (AccC) and two subunits each of ACCase subunit alpha (AccA) and ACCase subunit beta (AccD).

Its subcellular location is the cytoplasm. The catalysed reaction is N(6)-carboxybiotinyl-L-lysyl-[protein] + acetyl-CoA = N(6)-biotinyl-L-lysyl-[protein] + malonyl-CoA. Its pathway is lipid metabolism; malonyl-CoA biosynthesis; malonyl-CoA from acetyl-CoA: step 1/1. Functionally, component of the acetyl coenzyme A carboxylase (ACC) complex. First, biotin carboxylase catalyzes the carboxylation of biotin on its carrier protein (BCCP) and then the CO(2) group is transferred by the carboxyltransferase to acetyl-CoA to form malonyl-CoA. This is Acetyl-coenzyme A carboxylase carboxyl transferase subunit alpha from Pseudoalteromonas atlantica (strain T6c / ATCC BAA-1087).